A 274-amino-acid chain; its full sequence is Single-stranded DNA-binding protein WHY1, chloroplastic (274 aa).

Residues 1–54 (MSNFSLSPSPTSGFSLNLQNPTKTSYLSFSSSINTIFAPLSSNTTKSFSGLTHK) constitute a chloroplast transit peptide. The segment at 100 to 105 (KGKAAL) is required for ssDNA binding. The short motif at 178-191 (KGRSDEGRVRKVLK) is the Nuclear localization signal element. Positions 253–274 (PEDASRSNNANPRSGAELEWNR) are disordered.

It belongs to the Whirly family. Homotetramer.

The protein localises to the nucleus. Its subcellular location is the plastid. The protein resides in the chloroplast. In terms of biological role, single-stranded DNA-binding protein that acts as a transcriptional activator of the pathogenesis-related gene PR-10a. Upon elicitation, binds a 30bp promoter sequence known as elicitor element response (ERE) and is required for PR-10a expression. The protein is Single-stranded DNA-binding protein WHY1, chloroplastic (WHY1) of Solanum tuberosum (Potato).